The sequence spans 872 residues: Metabotropic glutamate receptor 2 (872 aa).

Positions 1 to 18 (MGSLLALLALLLLWGAVA) are cleaved as a signal peptide. Topologically, residues 19–567 (EGPAKKVLTL…QEYIRWGDAW (549 aa)) are extracellular. Cysteines 50 and 92 form a disulfide. The L-glutamate site is built by Arg57, Arg61, Ser145, Ala166, and Thr168. N-linked (GlcNAc...) asparagine glycosylation is found at Asn203 and Asn286. Intrachain disulfides connect Cys234/Cys518, Cys355/Cys362, Cys400/Cys407, Cys500/Cys519, Cys504/Cys522, Cys525/Cys537, and Cys540/Cys553. Asp295 contributes to the L-glutamate binding site. Asn338 is a glycosylation site (N-linked (GlcNAc...) asparagine). Lys377 serves as a coordination point for L-glutamate. Asn402 is a glycosylation site (N-linked (GlcNAc...) asparagine). The N-linked (GlcNAc...) asparagine glycan is linked to Asn547. Residues 568 to 590 (AVGPVTIACLGALATLFVLGVFV) form a helical membrane-spanning segment. Residues 591-604 (RHNATPVVKASGRE) are Cytoplasmic-facing. The chain crosses the membrane as a helical span at residues 605 to 625 (LCYILLGGVFLCYCMTFIFIA). The Extracellular segment spans residues 626-636 (KPSTAVCTLRR). Cys632 and Cys721 form a disulfide bridge. A helical transmembrane segment spans residues 637 to 655 (LGLGTAFSVCYSALLTKTN). Topologically, residues 656-679 (RIARIFGGAREGAQRPRFISPASQ) are cytoplasmic. The segment at 677–685 (ASQVAICLA) is important for interaction with HTR2A. The chain crosses the membrane as a helical span at residues 680-700 (VAICLALISGQLLIVVAWLVV). The Extracellular portion of the chain corresponds to 701-725 (EAPGTGKETAPERREVVTLRCNHRD). The helical transmembrane segment at 726 to 747 (ASMLGSLAYNVLLIALCTLYAF) threads the bilayer. The Cytoplasmic portion of the chain corresponds to 748-760 (KTRKCPENFNEAK). The chain crosses the membrane as a helical span at residues 761 to 783 (FIGFTMYTTCIIWLAFLPIFYVT). Residues 784–793 (SSDYRVQTTT) are Extracellular-facing. A helical transmembrane segment spans residues 794–819 (MCVSVSLSGSVVLGCLFAPKLHIILF). Residues 820–872 (QPQKNVVSHRAPTSRFGSAAARASSSLGQGSGSQFVPTVCNGREVVDSTTSSL) lie on the Cytoplasmic side of the membrane.

It belongs to the G-protein coupled receptor 3 family. Forms heterodimers with GRM3 or GRM4. Interacts with TAMALIN. Interacts with HTR2A. In terms of assembly, (Microbial infection) Interacts with H5N6 virus protein HA. As to quaternary structure, (Microbial infection) Interacts with rabies virus protein G. (Microbial infection) Interacts with SARS-CoV-2 virus spike protein S. In terms of tissue distribution, detected in brain cortex (at protein level). Widely expressed in different regions of the adult brain as well as in fetal brain.

It is found in the cell membrane. Its subcellular location is the synapse. The protein resides in the cell projection. It localises to the dendrite. Functionally, dimeric G protein-coupled receptor which is activated by the excitatory neurotransmitter L-glutamate. Plays critical roles in modulating synaptic transmission and neuronal excitability. Upon activation by glutamate, inhibits presynaptic calcium channels, reducing further glutamate release and dampening excitatory signaling. Mechanistically, ligand binding causes a conformation change that triggers signaling via guanine nucleotide-binding proteins (G proteins) and modulates the activity of down-stream effectors, such as adenylate cyclase. May mediate suppression of neurotransmission or may be involved in synaptogenesis or synaptic stabilization. In terms of biological role, (Microbial infection) Plays an important role in influenza virus internalization. Its function is as follows. (Microbial infection) Acts as a host entry factor for rabies virus that hijacks the endocytosis of GRM2 to enter cells. (Microbial infection) Acts as a host entry factor for SARS-CoV-2 that hijacks the endocytosis of GRM2 to enter cells. The polypeptide is Metabotropic glutamate receptor 2 (Homo sapiens (Human)).